Here is a 195-residue protein sequence, read N- to C-terminus: dCTP deaminase (195 aa).

DCTP-binding positions include R110–R115, D128, V136–E138, Y171, K178, and Q182. The active-site Proton donor/acceptor is the E138. The tract at residues Y171–E195 is disordered.

It belongs to the dCTP deaminase family. In terms of assembly, homotrimer.

The catalysed reaction is dCTP + H2O + H(+) = dUTP + NH4(+). It participates in pyrimidine metabolism; dUMP biosynthesis; dUMP from dCTP (dUTP route): step 1/2. Its function is as follows. Catalyzes the deamination of dCTP to dUTP. In Haemophilus influenzae (strain ATCC 51907 / DSM 11121 / KW20 / Rd), this protein is dCTP deaminase.